Reading from the N-terminus, the 98-residue chain is Large ribosomal subunit protein uL23 (98 aa).

The protein belongs to the universal ribosomal protein uL23 family. As to quaternary structure, part of the 50S ribosomal subunit. Contacts protein L29, and trigger factor when it is bound to the ribosome.

Functionally, one of the early assembly proteins it binds 23S rRNA. One of the proteins that surrounds the polypeptide exit tunnel on the outside of the ribosome. Forms the main docking site for trigger factor binding to the ribosome. This Streptococcus equi subsp. equi (strain 4047) protein is Large ribosomal subunit protein uL23.